A 350-amino-acid chain; its full sequence is Methionine aminopeptidase 1D, chloroplastic/mitochondrial (350 aa).

A chloroplast and mitochondrion-targeting transit peptide spans 1 to 49 (MAGVKSLQPRLISSFLGNNSIRSTQPLIHLFRFDLGRRHVSMQLSRTFS). Gly50 is modified (N-acetylglycine). A disordered region spans residues 71-90 (RLRPGNVSPRRPVPGHITKP). Residue His180 participates in substrate binding. Residues Asp197, Asp208, and His271 each coordinate a divalent metal cation. A substrate-binding site is contributed by His278. Positions 303 and 334 each coordinate a divalent metal cation.

Belongs to the peptidase M24A family. Methionine aminopeptidase type 1 subfamily. Co(2+) serves as cofactor. It depends on Zn(2+) as a cofactor. Requires Mn(2+) as cofactor. The cofactor is Fe(2+). Ubiquitous. Preferentially expressed in green tissues.

Its subcellular location is the plastid. The protein localises to the chloroplast. It is found in the mitochondrion. The catalysed reaction is Release of N-terminal amino acids, preferentially methionine, from peptides and arylamides.. Its function is as follows. Removes the N-terminal methionine from nascent proteins. The N-terminal methionine is often cleaved when the second residue in the primary sequence is small and uncharged (Met-Ala-, Cys, Gly, Pro, Ser, Thr, or Val). This Arabidopsis thaliana (Mouse-ear cress) protein is Methionine aminopeptidase 1D, chloroplastic/mitochondrial (MAP1D).